The chain runs to 123 residues: Small ribosomal subunit protein uS12 (123 aa).

Residues 1-32 (MPTIQQLVRKGRKTKVSKNKTPALKGSPQRRG) are disordered. Residues 9–18 (RKGRKTKVSK) are compositionally biased toward basic residues. D89 carries the post-translational modification 3-methylthioaspartic acid.

It belongs to the universal ribosomal protein uS12 family. In terms of assembly, part of the 30S ribosomal subunit. Contacts proteins S8 and S17. May interact with IF1 in the 30S initiation complex.

With S4 and S5 plays an important role in translational accuracy. Its function is as follows. Interacts with and stabilizes bases of the 16S rRNA that are involved in tRNA selection in the A site and with the mRNA backbone. Located at the interface of the 30S and 50S subunits, it traverses the body of the 30S subunit contacting proteins on the other side and probably holding the rRNA structure together. The combined cluster of proteins S8, S12 and S17 appears to hold together the shoulder and platform of the 30S subunit. This chain is Small ribosomal subunit protein uS12, found in Thermobifida fusca (strain YX).